A 1025-amino-acid chain; its full sequence is AP-2 complex subunit alpha (1025 aa).

Residues 713-737 (RSIMVPMPPPSRRNTIDDVNSKISS) form a disordered region. Thr727 carries the post-translational modification Phosphothreonine. Ser733 is subject to Phosphoserine.

This sequence belongs to the adaptor complexes large subunit family. Adaptor protein complex 2 (AP-2) is a heterotetramer composed of two large adaptins (alpha-type subunit APL3 and beta-type subunit APL1), a medium chain (mu-type subunit APM4) and a small adaptin (sigma-type subunit APS2).

It localises to the cell membrane. The protein resides in the membrane. The protein localises to the coated pit. Functionally, adaptins are components of the adaptor complexes which link clathrin to receptors in coated vesicles. Clathrin-associated protein complexes are believed to interact with the cytoplasmic tails of membrane proteins, leading to their selection and concentration. Alpha adaptin is a subunit of the plasma membrane adaptor. Facilitates interaction between APL1 and APS2. The sequence is that of AP-2 complex subunit alpha (APL3) from Saccharomyces cerevisiae (strain ATCC 204508 / S288c) (Baker's yeast).